Consider the following 457-residue polypeptide: Multidrug resistance protein MdtK (457 aa).

12 helical membrane passes run 11 to 31 (LLAL…MGFV), 53 to 73 (IWLP…PVIA), 93 to 113 (WLAG…GYII), 127 to 147 (AVGY…FQVA), 160 to 180 (GMVM…IFIY), 189 to 209 (GGVG…FSMI), 243 to 263 (LPIA…ALLV), 276 to 296 (IALN…AAVT), 314 to 334 (AART…LFTV), 357 to 377 (LMLL…GSGI), 387 to 407 (IFFI…YILA), and 418 to 438 (PAGF…LMML).

This sequence belongs to the multi antimicrobial extrusion (MATE) (TC 2.A.66.1) family. MdtK subfamily.

Its subcellular location is the cell inner membrane. Functionally, multidrug efflux pump that functions probably as a Na(+)/drug antiporter. The sequence is that of Multidrug resistance protein MdtK from Enterobacter sp. (strain 638).